Consider the following 666-residue polypeptide: UvrABC system protein B (666 aa).

The 144-residue stretch at 28 to 171 folds into the Helicase ATP-binding domain; the sequence is NNINQGIQRQ…YLHVGELIEF (144 aa). 41–48 contributes to the ATP binding site; that stretch reads GATGTGKT. The short motif at 94-117 is the Beta-hairpin element; that stretch reads YFDYYQPEAYKPITDTYIEKDSVT. The region spanning 436-598 is the Helicase C-terminal domain; it reads QIDDLINELM…IIPKTIIKPI (163 aa). One can recognise a UVR domain in the interval 624–659; sequence NQKIKELKKKMEEAAKKREYEVAAQYRDMIVELEAI.

The protein belongs to the UvrB family. In terms of assembly, forms a heterotetramer with UvrA during the search for lesions. Interacts with UvrC in an incision complex.

Its subcellular location is the cytoplasm. Functionally, the UvrABC repair system catalyzes the recognition and processing of DNA lesions. A damage recognition complex composed of 2 UvrA and 2 UvrB subunits scans DNA for abnormalities. Upon binding of the UvrA(2)B(2) complex to a putative damaged site, the DNA wraps around one UvrB monomer. DNA wrap is dependent on ATP binding by UvrB and probably causes local melting of the DNA helix, facilitating insertion of UvrB beta-hairpin between the DNA strands. Then UvrB probes one DNA strand for the presence of a lesion. If a lesion is found the UvrA subunits dissociate and the UvrB-DNA preincision complex is formed. This complex is subsequently bound by UvrC and the second UvrB is released. If no lesion is found, the DNA wraps around the other UvrB subunit that will check the other stand for damage. In Ureaplasma parvum serovar 3 (strain ATCC 27815 / 27 / NCTC 11736), this protein is UvrABC system protein B.